We begin with the raw amino-acid sequence, 491 residues long: MADLANEEKPAVAPSVFVFQKDKGQKRSAGSSSPEAGEDSDHEDGNYCPPVKRERTSSLTHSEEKSSGFRLKPPTLIHGQAPSAGLPSQKPREQQRGVLRPAVLQAPQPKVLSQTVPSSGTNGVSMPADCTGPATSVSPENLTQRSPSESAEETHTLEEKVPQKTPHGTSEEGHCEEEQAAPQAFVFGQNLRDRVKLMNENASVADVDSAAHPSSETPSATNYFLQYISSSADNATHSADNSTKFVFGQNMSERVLSPPKLNEANSDTSRETTHAQSGSESSSQEAAPKKESLAESAAAYTKATAWTCLLEKVEVITGEEAESNVLQIQCKLFVFDKTSQSWVERGRGLLRLNDMASTDDGTLQSRLVMRTQGSLRLILNTKLWAQMQMDKASEKSIRITATDAEDQGVKVFLISASSKDTGQLYAALHHRILALRSRAEQEQEAKAPPPEPGATRATEEEDSDEDAVLAPSGVTGAGTGDEGDGQAPGST.

Basic and acidic residues predominate over residues 1-10 (MADLANEEKP). 2 disordered regions span residues 1 to 177 (MADL…HCEE) and 255 to 292 (VLSP…KKES). A2 bears the N-acetylalanine mark. N6-acetyllysine occurs at positions 9 and 21. S32, S33, and S40 each carry phosphoserine. The Nuclear localization signal signature appears at 49–57 (PPVKRERTS). The segment covering 51-67 (VKRERTSSLTHSEEKSS) has biased composition (basic and acidic residues). At T56 the chain carries Phosphothreonine. S58 carries the phosphoserine modification. 2 stretches are compositionally biased toward polar residues: residues 111-124 (VLSQ…TNGV) and 133-149 (PATS…SPSE). S146 carries the post-translational modification Phosphoserine. The segment covering 152 to 162 (EETHTLEEKVP) has biased composition (basic and acidic residues). 4 positions are modified to phosphoserine: S257, S277, S279, and S296. Residues 275–286 (AQSGSESSSQEA) show a composition bias toward low complexity. A RanBD1 domain is found at 302–442 (KATAWTCLLE…LALRSRAEQE (141 aa)). The segment at 438-491 (RAEQEQEAKAPPPEPGATRATEEEDSDEDAVLAPSGVTGAGTGDEGDGQAPGST) is disordered. S463 bears the Phosphoserine mark.

In terms of assembly, interacts with CHC1 in a Ran-stimulated manner. Interacts with XPO1. Interacts (via its C-terminal R domain) with SMAD2 (dephosphorylated form via its MH1 and MH2 domains); the interaction results in the nuclear export of SMAD2 and termination of the TGF-beta signaling. Interacts (via its C-terminal R domain) with SMAD3 (dephosphorylated form via its MH1 domain); the interaction results in the nuclear export of SMAD3 and termination of the TGF-beta signaling. Post-translationally, phosphorylation at Ser-58 promotes its import into the nucleus.

It localises to the cytoplasm. It is found in the nucleus. Acts as a cofactor for XPO1/CRM1-mediated nuclear export, perhaps as export complex scaffolding protein. Bound to XPO1/CRM1, stabilizes the XPO1/CRM1-cargo interaction. In the absence of Ran-bound GTP prevents binding of XPO1/CRM1 to the nuclear pore complex. Binds to CHC1/RCC1 and increases the guanine nucleotide exchange activity of CHC1/RCC1. Recruits XPO1/CRM1 to CHC1/RCC1 in a Ran-dependent manner. Negative regulator of TGF-beta signaling through interaction with the R-SMAD proteins, SMAD2 and SMAD3, and mediating their nuclear export. The sequence is that of Ran-binding protein 3 (Ranbp3) from Mus musculus (Mouse).